Here is a 310-residue protein sequence, read N- to C-terminus: MNGGNHTSMTELFILGPTEDPTFCIAFFVIFLGVYMVTLVGNISIITLIRISSQLHTPVYLFLNHLAFVDILYSTLVSVIMLMELLEHELALPVAACAAELCITVLFGSSECFLLAAMAYDCYVAICSPLLYSTLMSSRVCFLLLGMSYVGGCMNGWIFTGCLLNLSFYGPYQIDHFFCDFSPLLKLSCSDVSIIGIIPSISSGSIIVVTVLVIAVFYICILMTILKMHSTDGCHKAFSTCNSYLTAVTLYYGTITFIYVMPKSNYSTEKNKVLSEFYTVVIPMLNHLIYSLKNRDVKDALRKAIVRVYT.

At 1-25 (MNGGNHTSMTELFILGPTEDPTFCI) the chain is on the extracellular side. Residue Asn5 is glycosylated (N-linked (GlcNAc...) asparagine). Residues 26 to 46 (AFFVIFLGVYMVTLVGNISII) form a helical membrane-spanning segment. The Cytoplasmic segment spans residues 47–54 (TLIRISSQ). A helical membrane pass occupies residues 55–75 (LHTPVYLFLNHLAFVDILYST). Over 76 to 99 (LVSVIMLMELLEHELALPVAACAA) the chain is Extracellular. Cys97 and Cys189 are joined by a disulfide. Residues 100–120 (ELCITVLFGSSECFLLAAMAY) form a helical membrane-spanning segment. Residues 121 to 133 (DCYVAICSPLLYS) lie on the Cytoplasmic side of the membrane. The helical transmembrane segment at 134-154 (TLMSSRVCFLLLGMSYVGGCM) threads the bilayer. Over 155 to 196 (NGWIFTGCLLNLSFYGPYQIDHFFCDFSPLLKLSCSDVSIIG) the chain is Extracellular. An N-linked (GlcNAc...) asparagine glycan is attached at Asn165. A helical membrane pass occupies residues 197–217 (IIPSISSGSIIVVTVLVIAVF). Residues 218–237 (YICILMTILKMHSTDGCHKA) are Cytoplasmic-facing. Residues 238-258 (FSTCNSYLTAVTLYYGTITFI) traverse the membrane as a helical segment. Over 259 to 271 (YVMPKSNYSTEKN) the chain is Extracellular. Residue Asn265 is glycosylated (N-linked (GlcNAc...) asparagine). A helical transmembrane segment spans residues 272-292 (KVLSEFYTVVIPMLNHLIYSL). Residues 293 to 310 (KNRDVKDALRKAIVRVYT) lie on the Cytoplasmic side of the membrane.

This sequence belongs to the G-protein coupled receptor 1 family.

The protein localises to the cell membrane. Functionally, potential odorant receptor. The polypeptide is Olfactory receptor 5P54 (Mus musculus (Mouse)).